The following is a 424-amino-acid chain: UDP-N-acetylglucosamine 1-carboxyvinyltransferase (424 aa).

Residue 22–23 coordinates phosphoenolpyruvate; the sequence is KN. R93 provides a ligand contact to UDP-N-acetyl-alpha-D-glucosamine. C117 acts as the Proton donor in catalysis. 2-(S-cysteinyl)pyruvic acid O-phosphothioketal is present on C117. UDP-N-acetyl-alpha-D-glucosamine-binding positions include 162–165, D307, and I329; that span reads KVSV.

It belongs to the EPSP synthase family. MurA subfamily.

The protein localises to the cytoplasm. It carries out the reaction phosphoenolpyruvate + UDP-N-acetyl-alpha-D-glucosamine = UDP-N-acetyl-3-O-(1-carboxyvinyl)-alpha-D-glucosamine + phosphate. It functions in the pathway cell wall biogenesis; peptidoglycan biosynthesis. Cell wall formation. Adds enolpyruvyl to UDP-N-acetylglucosamine. This is UDP-N-acetylglucosamine 1-carboxyvinyltransferase from Actinobacillus pleuropneumoniae serotype 3 (strain JL03).